Consider the following 475-residue polypeptide: Ribulose bisphosphate carboxylase large chain (475 aa).

Positions 1–2 (MS) are excised as a propeptide. Residue Pro-3 is modified to N-acetylproline. An N6,N6,N6-trimethyllysine modification is found at Lys-14. Substrate contacts are provided by Asn-123 and Thr-173. Lys-175 functions as the Proton acceptor in the catalytic mechanism. Position 177 (Lys-177) interacts with substrate. Residues Lys-201, Asp-203, and Glu-204 each contribute to the Mg(2+) site. Position 201 is an N6-carboxylysine (Lys-201). His-294 serves as the catalytic Proton acceptor. 3 residues coordinate substrate: Arg-295, His-327, and Ser-379.

It belongs to the RuBisCO large chain family. Type I subfamily. Heterohexadecamer of 8 large chains and 8 small chains; disulfide-linked. The disulfide link is formed within the large subunit homodimers. Mg(2+) serves as cofactor. Post-translationally, the disulfide bond which can form in the large chain dimeric partners within the hexadecamer appears to be associated with oxidative stress and protein turnover.

The protein resides in the plastid. It is found in the chloroplast. The catalysed reaction is 2 (2R)-3-phosphoglycerate + 2 H(+) = D-ribulose 1,5-bisphosphate + CO2 + H2O. It catalyses the reaction D-ribulose 1,5-bisphosphate + O2 = 2-phosphoglycolate + (2R)-3-phosphoglycerate + 2 H(+). In terms of biological role, ruBisCO catalyzes two reactions: the carboxylation of D-ribulose 1,5-bisphosphate, the primary event in carbon dioxide fixation, as well as the oxidative fragmentation of the pentose substrate in the photorespiration process. Both reactions occur simultaneously and in competition at the same active site. The sequence is that of Ribulose bisphosphate carboxylase large chain from Psilotum nudum (Whisk fern).